The chain runs to 252 residues: MVDPLCNYNVLEAIFSYLELSDLSRCSQVCKSWYHFLNDENSDVWRWHCLRKLPKESIKSDLLASVTTYKTKLRAYLHAWNPNDCSRNVYIKPNGFTLHRNPVAQSTDAARAKIGFRQGRHAWEVIWEGPLGTVAVIGISTKEAALQCHGYVALLGSDDQSWGWNLVENHLLHNGDMQGNYPLLNNAPKYQVGERIRVILDCDDNTLSFEKNYEFLGVAFRGLPAKKLYPTVSAVYGNTEVSMVYLGTPLDG.

The 48-residue stretch at 1 to 48 folds into the F-box domain; it reads MVDPLCNYNVLEAIFSYLELSDLSRCSQVCKSWYHFLNDENSDVWRWH. Positions 58–250 constitute a B30.2/SPRY domain; it reads IKSDLLASVT…VSMVYLGTPL (193 aa).

It belongs to the FBXO45/Fsn family. In terms of assembly, component of an E3 ubiquitin ligase complex composed of hiw and Fsn.

The protein localises to the synapse. It participates in protein modification; protein ubiquitination. Required in the presynaptic motoneuron to down-regulate the levels of wnd and restrain synaptic terminal growth at the neuromuscular junction (NMJ). This is F-box/SPRY domain-containing protein 1 from Drosophila mojavensis (Fruit fly).